Here is a 406-residue protein sequence, read N- to C-terminus: Imidazolonepropionase (406 aa).

Fe(3+) contacts are provided by His-65 and His-67. Zn(2+) contacts are provided by His-65 and His-67. Residues Arg-74, Tyr-137, and His-170 each coordinate 4-imidazolone-5-propanoate. Tyr-137 contacts N-formimidoyl-L-glutamate. Position 235 (His-235) interacts with Fe(3+). His-235 is a Zn(2+) binding site. Position 238 (Gln-238) interacts with 4-imidazolone-5-propanoate. Residue Asp-310 participates in Fe(3+) binding. Residue Asp-310 coordinates Zn(2+). The N-formimidoyl-L-glutamate site is built by Asn-312 and Gly-314. Thr-315 lines the 4-imidazolone-5-propanoate pocket.

The protein belongs to the metallo-dependent hydrolases superfamily. HutI family. Requires Zn(2+) as cofactor. The cofactor is Fe(3+).

The protein resides in the cytoplasm. The enzyme catalyses 4-imidazolone-5-propanoate + H2O = N-formimidoyl-L-glutamate. Its pathway is amino-acid degradation; L-histidine degradation into L-glutamate; N-formimidoyl-L-glutamate from L-histidine: step 3/3. Functionally, catalyzes the hydrolytic cleavage of the carbon-nitrogen bond in imidazolone-5-propanoate to yield N-formimidoyl-L-glutamate. It is the third step in the universal histidine degradation pathway. This is Imidazolonepropionase from Vibrio vulnificus (strain CMCP6).